A 126-amino-acid polypeptide reads, in one-letter code: MNLIAILEQEEIARLTGGNAVTEFAPGDTVVVSVNVVEGTRKRVQAFEGVVIAKRNRGLNSSFIVRKISSGEAVERTFQLYSPQIAGIEVKRRGDVRRAKLYYLRSRSGKSARIKEKLVLKKAKSA.

Belongs to the bacterial ribosomal protein bL19 family.

In terms of biological role, this protein is located at the 30S-50S ribosomal subunit interface and may play a role in the structure and function of the aminoacyl-tRNA binding site. This chain is Large ribosomal subunit protein bL19, found in Bordetella bronchiseptica (strain ATCC BAA-588 / NCTC 13252 / RB50) (Alcaligenes bronchisepticus).